The sequence spans 270 residues: Sulfur carrier protein FdhD (270 aa).

The active-site Cysteine persulfide intermediate is the cysteine 108. A Mo-bis(molybdopterin guanine dinucleotide)-binding site is contributed by 247 to 252 (FIRDGR).

Belongs to the FdhD family.

The protein resides in the cytoplasm. In terms of biological role, required for formate dehydrogenase (FDH) activity. Acts as a sulfur carrier protein that transfers sulfur from IscS to the molybdenum cofactor prior to its insertion into FDH. The protein is Sulfur carrier protein FdhD of Halalkalibacterium halodurans (strain ATCC BAA-125 / DSM 18197 / FERM 7344 / JCM 9153 / C-125) (Bacillus halodurans).